The sequence spans 901 residues: Mediator of RNA polymerase II transcription subunit 14 (901 aa).

Belongs to the Mediator complex subunit 14 family. In terms of assembly, component of the Mediator complex.

Its subcellular location is the nucleus. In terms of biological role, component of the Mediator complex, a coactivator involved in the regulated transcription of nearly all RNA polymerase II-dependent genes. Mediator functions as a bridge to convey information from gene-specific regulatory proteins to the basal RNA polymerase II transcription machinery. Mediator is recruited to promoters by direct interactions with regulatory proteins and serves as a scaffold for the assembly of a functional preinitiation complex with RNA polymerase II and the general transcription factors. The polypeptide is Mediator of RNA polymerase II transcription subunit 14 (RGR1) (Yarrowia lipolytica (strain CLIB 122 / E 150) (Yeast)).